The sequence spans 385 residues: Histidinol-phosphate aminotransferase (385 aa).

Lys-230 carries the post-translational modification N6-(pyridoxal phosphate)lysine.

Belongs to the class-II pyridoxal-phosphate-dependent aminotransferase family. It depends on pyridoxal 5'-phosphate as a cofactor.

The catalysed reaction is L-histidinol phosphate + 2-oxoglutarate = 3-(imidazol-4-yl)-2-oxopropyl phosphate + L-glutamate. The protein operates within amino-acid biosynthesis; L-histidine biosynthesis; L-histidine from 5-phospho-alpha-D-ribose 1-diphosphate: step 7/9. The sequence is that of Histidinol-phosphate aminotransferase from Saccharomyces cerevisiae (strain ATCC 204508 / S288c) (Baker's yeast).